Here is a 79-residue protein sequence, read N- to C-terminus: Protein FAM236C (79 aa).

Residues 19 to 48 (KGPQKDPEELVAVSDTAEDPSSGTGLPREP) are disordered.

This sequence belongs to the FAM236 family.

This chain is Protein FAM236C, found in Homo sapiens (Human).